Here is a 320-residue protein sequence, read N- to C-terminus: Mechanosensory protein 3 (320 aa).

2 consecutive LIM zinc-binding domains span residues 29–79 and 89–145; these read CNCC…CSQH and CAGC…CMTH. Positions 216–275 form a DNA-binding region, homeobox; that stretch reads RRGPRTTIKQNQLDVLNEMFSNTPKPSKHARAKKALETGLSMRVIQVWFQNRRSKERRLK.

The protein localises to the nucleus. Functionally, specifies differentiation of the set of six touch receptor neurons. Binds cooperatively as a heterodimer with unc-86 to sites in the mec-3 gene promoter. This is Mechanosensory protein 3 (mec-3) from Caenorhabditis remanei (Caenorhabditis vulgaris).